A 206-amino-acid chain; its full sequence is Putative amino-acid transporter YggA (206 aa).

6 helical membrane passes run 1–21, 37–57, 65–85, 116–136, 148–168, and 185–205; these read MFAT…PIGA, LLAA…GVFG, SPIG…WFGI, LGVT…LGSF, FAAG…FGAA, and TIVG…ALLA.

This sequence belongs to the LysE/ArgO transporter (TC 2.A.75) family.

It is found in the cell membrane. This is Putative amino-acid transporter YggA (yggA) from Aeromonas salmonicida.